Here is a 141-residue protein sequence, read N- to C-terminus: Large ribosomal subunit protein uL11 (141 aa).

It belongs to the universal ribosomal protein uL11 family. Part of the ribosomal stalk of the 50S ribosomal subunit. Interacts with L10 and the large rRNA to form the base of the stalk. L10 forms an elongated spine to which L12 dimers bind in a sequential fashion forming a multimeric L10(L12)X complex. One or more lysine residues are methylated.

Its function is as follows. Forms part of the ribosomal stalk which helps the ribosome interact with GTP-bound translation factors. The polypeptide is Large ribosomal subunit protein uL11 (Alkaliphilus oremlandii (strain OhILAs) (Clostridium oremlandii (strain OhILAs))).